The following is a 288-amino-acid chain: DNA repair protein RecO (288 aa).

The protein belongs to the RecO family.

In terms of biological role, involved in DNA repair and RecF pathway recombination. The protein is DNA repair protein RecO of Trichodesmium erythraeum (strain IMS101).